A 300-amino-acid polypeptide reads, in one-letter code: Probable membrane transporter protein YtnM (300 aa).

A run of 8 helical transmembrane segments spans residues 4-24 (LIVF…LGMA), 33-53 (LLAF…AEVV), 76-96 (LVIP…QLPG), 102-122 (YISL…LFQY), 139-159 (IPLG…WGPV), 206-226 (LWVF…AWLV), 231-251 (PQLM…RTLI), and 260-280 (VHPL…LFVL).

It belongs to the 4-toluene sulfonate uptake permease (TSUP) (TC 2.A.102) family.

It localises to the cell membrane. The sequence is that of Probable membrane transporter protein YtnM (ytnM) from Bacillus subtilis (strain 168).